We begin with the raw amino-acid sequence, 341 residues long: Uroporphyrinogen decarboxylase (341 aa).

Substrate contacts are provided by residues arginine 23–arginine 27, aspartate 73, tyrosine 147, serine 202, and histidine 318.

This sequence belongs to the uroporphyrinogen decarboxylase family. Homodimer.

It localises to the cytoplasm. It catalyses the reaction uroporphyrinogen III + 4 H(+) = coproporphyrinogen III + 4 CO2. It functions in the pathway porphyrin-containing compound metabolism; protoporphyrin-IX biosynthesis; coproporphyrinogen-III from 5-aminolevulinate: step 4/4. Its function is as follows. Catalyzes the decarboxylation of four acetate groups of uroporphyrinogen-III to yield coproporphyrinogen-III. The sequence is that of Uroporphyrinogen decarboxylase from Novosphingobium aromaticivorans (strain ATCC 700278 / DSM 12444 / CCUG 56034 / CIP 105152 / NBRC 16084 / F199).